The primary structure comprises 143 residues: Probable cyclic pyranopterin monophosphate synthase (143 aa).

Substrate contacts are provided by residues 61–63 and 97–98; these read YCH and ME. Asp112 is a catalytic residue.

Belongs to the MoaC family. Homohexamer; trimer of dimers.

It carries out the reaction (8S)-3',8-cyclo-7,8-dihydroguanosine 5'-triphosphate = cyclic pyranopterin phosphate + diphosphate. The protein operates within cofactor biosynthesis; molybdopterin biosynthesis. Catalyzes the conversion of (8S)-3',8-cyclo-7,8-dihydroguanosine 5'-triphosphate to cyclic pyranopterin monophosphate (cPMP). The protein is Probable cyclic pyranopterin monophosphate synthase of Thermoplasma acidophilum (strain ATCC 25905 / DSM 1728 / JCM 9062 / NBRC 15155 / AMRC-C165).